The sequence spans 336 residues: Ketol-acid reductoisomerase (NADP(+)) 1 (336 aa).

The KARI N-terminal Rossmann domain maps to 2–181 (AKVYYEKDVT…GATRAGVLET (180 aa)). Residues 25–28 (YGSQ), Arg-48, Ser-52, and 82–85 (DELQ) contribute to the NADP(+) site. The active site involves His-107. Gly-133 is a binding site for NADP(+). The KARI C-terminal knotted domain occupies 182–327 (TFKEETETDL…RKLRGMMPFV (146 aa)). Mg(2+)-binding residues include Asp-190, Glu-194, Glu-226, and Glu-230. Ser-251 serves as a coordination point for substrate.

This sequence belongs to the ketol-acid reductoisomerase family. Mg(2+) serves as cofactor.

The enzyme catalyses (2R)-2,3-dihydroxy-3-methylbutanoate + NADP(+) = (2S)-2-acetolactate + NADPH + H(+). It catalyses the reaction (2R,3R)-2,3-dihydroxy-3-methylpentanoate + NADP(+) = (S)-2-ethyl-2-hydroxy-3-oxobutanoate + NADPH + H(+). Its pathway is amino-acid biosynthesis; L-isoleucine biosynthesis; L-isoleucine from 2-oxobutanoate: step 2/4. It participates in amino-acid biosynthesis; L-valine biosynthesis; L-valine from pyruvate: step 2/4. Its function is as follows. Involved in the biosynthesis of branched-chain amino acids (BCAA). Catalyzes an alkyl-migration followed by a ketol-acid reduction of (S)-2-acetolactate (S2AL) to yield (R)-2,3-dihydroxy-isovalerate. In the isomerase reaction, S2AL is rearranged via a Mg-dependent methyl migration to produce 3-hydroxy-3-methyl-2-ketobutyrate (HMKB). In the reductase reaction, this 2-ketoacid undergoes a metal-dependent reduction by NADPH to yield (R)-2,3-dihydroxy-isovalerate. The sequence is that of Ketol-acid reductoisomerase (NADP(+)) 1 from Bacillus anthracis.